Reading from the N-terminus, the 284-residue chain is 2-dehydro-3-deoxyphosphooctonate aldolase (284 aa).

This sequence belongs to the KdsA family.

Its subcellular location is the cytoplasm. It carries out the reaction D-arabinose 5-phosphate + phosphoenolpyruvate + H2O = 3-deoxy-alpha-D-manno-2-octulosonate-8-phosphate + phosphate. The protein operates within carbohydrate biosynthesis; 3-deoxy-D-manno-octulosonate biosynthesis; 3-deoxy-D-manno-octulosonate from D-ribulose 5-phosphate: step 2/3. Its pathway is bacterial outer membrane biogenesis; lipopolysaccharide biosynthesis. The protein is 2-dehydro-3-deoxyphosphooctonate aldolase of Shigella boydii serotype 18 (strain CDC 3083-94 / BS512).